The primary structure comprises 466 residues: Oryzain beta chain (466 aa).

The signal sequence occupies residues Met1 to Ala21. Residues Ala22–Glu140 constitute a propeptide, activation peptide. 3 disulfides stabilise this stretch: Cys162–Cys205, Cys196–Cys238, and Cys296–Cys347. The active site involves Cys165. Residues His302 and Asn322 contribute to the active site. Asn341 is a glycosylation site (N-linked (GlcNAc...) asparagine). The disordered stretch occupies residues Lys358–Ser380. Residues Asn362–Ala466 constitute a propeptide, removed in mature form. A compositionally biased stretch (pro residues) spans Pro363–Ser380. 2 disulfides stabilise this stretch: Cys386–Cys398 and Cys392–Cys413. Asn389 is a glycosylation site (N-linked (GlcNAc...) asparagine).

It belongs to the peptidase C1 family. As to expression, expressed only in seeds.

Its function is as follows. Probable thiol protease. This chain is Oryzain beta chain, found in Oryza sativa subsp. japonica (Rice).